The chain runs to 257 residues: Nickel import system ATP-binding protein NikD (257 aa).

The ABC transporter domain maps to 4–245; sequence IDIQNLTIKN…HLHPYTERLI (242 aa). 37 to 44 contributes to the ATP binding site; that stretch reads GESGAGKS.

Belongs to the ABC transporter superfamily. As to quaternary structure, the complex is composed of two ATP-binding proteins (NikD and NikE), two transmembrane proteins (NikB and NikC) and a solute-binding protein (NikA).

The protein localises to the cell membrane. It catalyses the reaction Ni(2+)(out) + ATP + H2O = Ni(2+)(in) + ADP + phosphate + H(+). In terms of biological role, part of the ABC transporter complex NikABCDE (Opp2) involved in nickel import. Probably responsible for energy coupling to the transport system. This Staphylococcus aureus (strain Mu50 / ATCC 700699) protein is Nickel import system ATP-binding protein NikD.